The primary structure comprises 92 residues: DNA/RNA-binding protein Alba (92 aa).

Lys11 carries the post-translational modification N6-acetyllysine.

This sequence belongs to the histone-like Alba family. Post-translationally, acetylated. Acetylation at Lys-11 decreases DNA-binding affinity.

The protein resides in the cytoplasm. It is found in the chromosome. In terms of biological role, binds double-stranded DNA tightly but without sequence specificity. Involved in DNA compaction. This chain is DNA/RNA-binding protein Alba, found in Pyrobaculum aerophilum (strain ATCC 51768 / DSM 7523 / JCM 9630 / CIP 104966 / NBRC 100827 / IM2).